A 342-amino-acid chain; its full sequence is Methionyl-tRNA formyltransferase (342 aa).

Residue 119–122 (SILP) participates in (6S)-5,6,7,8-tetrahydrofolate binding.

It belongs to the Fmt family.

It carries out the reaction L-methionyl-tRNA(fMet) + (6R)-10-formyltetrahydrofolate = N-formyl-L-methionyl-tRNA(fMet) + (6S)-5,6,7,8-tetrahydrofolate + H(+). Its function is as follows. Attaches a formyl group to the free amino group of methionyl-tRNA(fMet). The formyl group appears to play a dual role in the initiator identity of N-formylmethionyl-tRNA by promoting its recognition by IF2 and preventing the misappropriation of this tRNA by the elongation apparatus. The chain is Methionyl-tRNA formyltransferase from Nostoc sp. (strain PCC 7120 / SAG 25.82 / UTEX 2576).